Here is a 382-residue protein sequence, read N- to C-terminus: Ribosomal RNA large subunit methyltransferase F (382 aa).

Disordered stretches follow at residues 1–53 (MTKP…LHRD) and 269–288 (NRAS…KSQL). A compositionally biased stretch (basic residues) spans 8 to 24 (ASRKPVTKSGRNSKRSR). A compositionally biased stretch (basic and acidic residues) spans 269-286 (NRASKGHKLEPKAPKDKS).

The protein belongs to the methyltransferase superfamily. METTL16/RlmF family.

It is found in the cytoplasm. The catalysed reaction is adenosine(1618) in 23S rRNA + S-adenosyl-L-methionine = N(6)-methyladenosine(1618) in 23S rRNA + S-adenosyl-L-homocysteine + H(+). In terms of biological role, specifically methylates the adenine in position 1618 of 23S rRNA. The sequence is that of Ribosomal RNA large subunit methyltransferase F from Shewanella woodyi (strain ATCC 51908 / MS32).